We begin with the raw amino-acid sequence, 283 residues long: Agmatinase (283 aa).

A divalent metal cation contacts are provided by histidine 112, aspartate 131, histidine 133, aspartate 135, aspartate 211, and aspartate 213.

The protein belongs to the arginase family. Agmatinase subfamily. In terms of assembly, homotetramer. It depends on a divalent metal cation as a cofactor.

It carries out the reaction agmatine + H2O = urea + putrescine. It functions in the pathway amine and polyamine biosynthesis; putrescine biosynthesis via agmatine pathway; putrescine from agmatine: step 1/1. Its activity is regulated as follows. Inhibited by putrescine. Activity is not affected by arginine and ornithine. Catalyzes the formation of putrescine from agmatine. Cannot use arginine. The polypeptide is Agmatinase (Pyrococcus horikoshii (strain ATCC 700860 / DSM 12428 / JCM 9974 / NBRC 100139 / OT-3)).